Reading from the N-terminus, the 830-residue chain is DNA gyrase subunit A (830 aa).

Residues 33 to 497 (LPDVRDGLKP…AENDIDIEDL (465 aa)) form the Topo IIA-type catalytic domain. The active-site O-(5'-phospho-DNA)-tyrosine intermediate is the Y121. The GyrA-box signature appears at 524 to 530 (QKRGGRG). A disordered region spans residues 805–830 (KDDSEQLEDSEEVSEVHDAEENNSEE).

Belongs to the type II topoisomerase GyrA/ParC subunit family. In terms of assembly, heterotetramer, composed of two GyrA and two GyrB chains. In the heterotetramer, GyrA contains the active site tyrosine that forms a transient covalent intermediate with DNA, while GyrB binds cofactors and catalyzes ATP hydrolysis.

It is found in the cytoplasm. The catalysed reaction is ATP-dependent breakage, passage and rejoining of double-stranded DNA.. Functionally, a type II topoisomerase that negatively supercoils closed circular double-stranded (ds) DNA in an ATP-dependent manner to modulate DNA topology and maintain chromosomes in an underwound state. Negative supercoiling favors strand separation, and DNA replication, transcription, recombination and repair, all of which involve strand separation. Also able to catalyze the interconversion of other topological isomers of dsDNA rings, including catenanes and knotted rings. Type II topoisomerases break and join 2 DNA strands simultaneously in an ATP-dependent manner. This is DNA gyrase subunit A from Clostridium acetobutylicum (strain ATCC 824 / DSM 792 / JCM 1419 / IAM 19013 / LMG 5710 / NBRC 13948 / NRRL B-527 / VKM B-1787 / 2291 / W).